We begin with the raw amino-acid sequence, 82 residues long: RNA-binding protein Hfq (82 aa).

Residues Asp-10–Val-70 form the Sm domain.

The protein belongs to the Hfq family. As to quaternary structure, homohexamer.

In terms of biological role, RNA chaperone that binds small regulatory RNA (sRNAs) and mRNAs to facilitate mRNA translational regulation in response to envelope stress, environmental stress and changes in metabolite concentrations. Also binds with high specificity to tRNAs. This is RNA-binding protein Hfq from Parvibaculum lavamentivorans (strain DS-1 / DSM 13023 / NCIMB 13966).